The primary structure comprises 348 residues: NADH-quinone oxidoreductase subunit H (348 aa).

9 consecutive transmembrane segments (helical) span residues 13-33, 50-70, 82-102, 115-135, 161-181, 198-218, 258-278, 285-305, and 321-341; these read LIMV…IAFL, PNVV…KFIL, AVFL…YAVI, VGIL…IMGG, IGLV…TDIV, FLDW…ISGL, AIVL…LPIV, WVPG…MIAL, and LGWK…AFVL.

It belongs to the complex I subunit 1 family. NDH-1 is composed of 14 different subunits. Subunits NuoA, H, J, K, L, M, N constitute the membrane sector of the complex.

Its subcellular location is the cell inner membrane. It catalyses the reaction a quinone + NADH + 5 H(+)(in) = a quinol + NAD(+) + 4 H(+)(out). Its function is as follows. NDH-1 shuttles electrons from NADH, via FMN and iron-sulfur (Fe-S) centers, to quinones in the respiratory chain. The immediate electron acceptor for the enzyme in this species is believed to be ubiquinone. Couples the redox reaction to proton translocation (for every two electrons transferred, four hydrogen ions are translocated across the cytoplasmic membrane), and thus conserves the redox energy in a proton gradient. This subunit may bind ubiquinone. The chain is NADH-quinone oxidoreductase subunit H from Agrobacterium fabrum (strain C58 / ATCC 33970) (Agrobacterium tumefaciens (strain C58)).